Here is a 322-residue protein sequence, read N- to C-terminus: Ribosomal RNA small subunit methyltransferase H (322 aa).

S-adenosyl-L-methionine is bound by residues 47–49 (GGH), D67, F93, D112, and Q119.

Belongs to the methyltransferase superfamily. RsmH family.

It is found in the cytoplasm. It carries out the reaction cytidine(1402) in 16S rRNA + S-adenosyl-L-methionine = N(4)-methylcytidine(1402) in 16S rRNA + S-adenosyl-L-homocysteine + H(+). Functionally, specifically methylates the N4 position of cytidine in position 1402 (C1402) of 16S rRNA. The sequence is that of Ribosomal RNA small subunit methyltransferase H from Stenotrophomonas maltophilia (strain R551-3).